The chain runs to 1744 residues: Probable disease resistance protein At4g19520 (1744 aa).

Positions 3–163 (DGKEVYISFN…KIVADVRQKL (161 aa)) constitute a TIR 1 domain. The active site involves Glu-80. The NB-ARC domain occupies 192-411 (SLGIWGMAGI…VSEKEIFLDI (220 aa)). LRR repeat units follow at residues 503–526 (YEDV…AFQH), 557–581 (PPEL…GFQY), 583–602 (VELN…TKNL), 603–626 (EVLK…QYSP), 648–669 (LQHL…PKVP), 670–692 (PSIR…NHSS), 710–733 (DHRK…IVIF), 734–754 (ESLE…QGFP), 755–777 (QNLK…LCHH), 779–802 (SKLV…MSNM), 804–823 (YLAV…KELP), 824–846 (RNLK…LLET), 848–871 (SEVV…MSKL), 892–915 (PLNL…IGDL), 917–939 (LLDT…MHNL), 941–963 (PLKV…LPKV), 987–1010 (YEHR…IRWM), 1011–1035 (PSLK…DFSK), 1037–1059 (LSLR…SLQL), and 1062–1086 (AHGC…TFSN). Residues 1399–1559 (RNNDVFVSFH…KVANDIRKKL (161 aa)) form the TIR 2 domain.

The protein belongs to the disease resistance TIR-NB-LRR family.

It carries out the reaction NAD(+) + H2O = ADP-D-ribose + nicotinamide + H(+). Functionally, probable disease resistance protein. The chain is Probable disease resistance protein At4g19520 from Arabidopsis thaliana (Mouse-ear cress).